The chain runs to 369 residues: DNA replication and repair protein RecF (369 aa).

ATP is bound at residue 30-37 (GDNAQGKT).

This sequence belongs to the RecF family.

It localises to the cytoplasm. The RecF protein is involved in DNA metabolism; it is required for DNA replication and normal SOS inducibility. RecF binds preferentially to single-stranded, linear DNA. It also seems to bind ATP. The sequence is that of DNA replication and repair protein RecF from Streptococcus equi subsp. equi (strain 4047).